Here is an 83-residue protein sequence, read N- to C-terminus: Large ribosomal subunit protein eL31 (83 aa).

It belongs to the eukaryotic ribosomal protein eL31 family.

This Methanococcus maripaludis (strain DSM 14266 / JCM 13030 / NBRC 101832 / S2 / LL) protein is Large ribosomal subunit protein eL31.